We begin with the raw amino-acid sequence, 529 residues long: Peptide chain release factor 3 (529 aa).

The tr-type G domain occupies 11–280; the sequence is SKRRTFAIIS…GLTDWAPAPL (270 aa). GTP-binding positions include 20 to 27, 88 to 92, and 142 to 145; these read SHPDAGKT, DTPGH, and NKLD.

Belongs to the TRAFAC class translation factor GTPase superfamily. Classic translation factor GTPase family. PrfC subfamily.

It is found in the cytoplasm. Functionally, increases the formation of ribosomal termination complexes and stimulates activities of RF-1 and RF-2. It binds guanine nucleotides and has strong preference for UGA stop codons. It may interact directly with the ribosome. The stimulation of RF-1 and RF-2 is significantly reduced by GTP and GDP, but not by GMP. This is Peptide chain release factor 3 from Vibrio vulnificus (strain YJ016).